The chain runs to 389 residues: Phosphopentomutase (389 aa).

Positions 9, 282, 287, 323, 324, and 335 each coordinate Mn(2+).

It belongs to the phosphopentomutase family. Requires Mn(2+) as cofactor.

The protein localises to the cytoplasm. The enzyme catalyses 2-deoxy-alpha-D-ribose 1-phosphate = 2-deoxy-D-ribose 5-phosphate. The catalysed reaction is alpha-D-ribose 1-phosphate = D-ribose 5-phosphate. It participates in carbohydrate degradation; 2-deoxy-D-ribose 1-phosphate degradation; D-glyceraldehyde 3-phosphate and acetaldehyde from 2-deoxy-alpha-D-ribose 1-phosphate: step 1/2. Its function is as follows. Isomerase that catalyzes the conversion of deoxy-ribose 1-phosphate (dRib-1-P) and ribose 1-phosphate (Rib-1-P) to deoxy-ribose 5-phosphate (dRib-5-P) and ribose 5-phosphate (Rib-5-P), respectively. The protein is Phosphopentomutase of Pseudothermotoga lettingae (strain ATCC BAA-301 / DSM 14385 / NBRC 107922 / TMO) (Thermotoga lettingae).